Reading from the N-terminus, the 445-residue chain is Putative diacyglycerol O-acyltransferase Rv2285 (445 aa).

His-135 acts as the Proton acceptor in catalysis.

It belongs to the long-chain O-acyltransferase family.

It carries out the reaction an acyl-CoA + a 1,2-diacyl-sn-glycerol = a triacyl-sn-glycerol + CoA. It catalyses the reaction di-(9Z)-octadecenoylglycerol + (9Z)-octadecenoyl-CoA = 1,2,3-tri-(9Z-octadecenoyl)-glycerol + CoA. Its pathway is glycerolipid metabolism; triacylglycerol biosynthesis. Its function is as follows. Catalyzes the terminal and only committed step in triacylglycerol synthesis by using diacylglycerol and fatty acyl CoA as substrates. Required for storage lipid synthesis. Functionally, upon expression in E.coli functions weakly as a triacylglycerol synthase, making triacylglycerol (TG) from diolein and long-chain fatty acyl-CoA. Has very weak wax synthase activity, incorporating palmityl alcohol into wax esters in the presence of palmitoyl-CoA. The sequence is that of Putative diacyglycerol O-acyltransferase Rv2285 from Mycobacterium tuberculosis (strain ATCC 25618 / H37Rv).